The primary structure comprises 641 residues: MSGPARIQLLSLRLANQIAAGEVVERPASVAKELLENSLDAGARRVDIEVEQGGVKLLRVRDDGCGIAADDLPLALARHATSKIRELEDLERVASLGFRGEALASIGSVARLTLTSRTADAGQAWQVETEGRDMEARVQPAAYPVGTSVEVRDLFFNTPARRKFLRAEKTEFEHLQEVVRRLALARFDVAFHLRHNGRSALALHEAGDETARARRVAAVCGPAFLEQALPIEVERAGLRLWGWVGLPTFSRSQADLQYFYVNGRMVRDKLVAHAVRQAYRDVLFNGRHPTFVLFLEVDPAVVDVNVHPTKHEVRFRDSRMIHDFLYGTLHRVLGEVRPEDRLAAPAAVAPPAPASGAAAGEFRGQEEMPLSATPPAREPARPAAWKGAGAGYQAPSPRPARSAEAGGVYREFFAPLAEPRTEPATRTGEESGISSGDTSLGDTSPGGIPPLGYALAQLKGIYILAENAQGLVLVDMHAAHERITYERLKTAMASEGLRGQPLLVPEGLALSQREADCAEEHAEWFQRLGFELQRLGPETLAIRQTPALLRQAEAGQLVRDVLADLLEYGSSDRIEAHLNELLATMACHGSVRANRRLTLPEMNALLRDMESTERSGQCNHGRPTWTQLGMADLDKLFLRGR.

Residues 345–445 are disordered; the sequence is PAAVAPPAPA…GDTSLGDTSP (101 aa). Positions 419-429 are enriched in basic and acidic residues; the sequence is PRTEPATRTGE. The segment covering 432-442 has biased composition (polar residues); sequence GISSGDTSLGD.

The protein belongs to the DNA mismatch repair MutL/HexB family.

This protein is involved in the repair of mismatches in DNA. It is required for dam-dependent methyl-directed DNA mismatch repair. May act as a 'molecular matchmaker', a protein that promotes the formation of a stable complex between two or more DNA-binding proteins in an ATP-dependent manner without itself being part of a final effector complex. The protein is DNA mismatch repair protein MutL of Azotobacter vinelandii (strain DJ / ATCC BAA-1303).